A 479-amino-acid chain; its full sequence is Endoglucanase 20 (479 aa).

The signal sequence occupies residues 1-21 (MGKLLVLMLVGMFLAFESLEA). A glycan (N-linked (GlcNAc...) asparagine) is linked at Asn29. Asp76 (nucleophile) is an active-site residue. His398 is an active-site residue. Asn442 carries an N-linked (GlcNAc...) asparagine glycan. Active-site residues include Asp449 and Glu458.

The protein belongs to the glycosyl hydrolase 9 (cellulase E) family.

The protein resides in the secreted. It catalyses the reaction Endohydrolysis of (1-&gt;4)-beta-D-glucosidic linkages in cellulose, lichenin and cereal beta-D-glucans.. This is Endoglucanase 20 from Arabidopsis thaliana (Mouse-ear cress).